The sequence spans 556 residues: Formate--tetrahydrofolate ligase (556 aa).

65–72 (TPAGEGKS) provides a ligand contact to ATP.

It belongs to the formate--tetrahydrofolate ligase family.

It catalyses the reaction (6S)-5,6,7,8-tetrahydrofolate + formate + ATP = (6R)-10-formyltetrahydrofolate + ADP + phosphate. It participates in one-carbon metabolism; tetrahydrofolate interconversion. The chain is Formate--tetrahydrofolate ligase from Streptococcus equi subsp. zooepidemicus (strain MGCS10565).